A 163-amino-acid chain; its full sequence is MPSFDIVSEVDLQEARNAVDNASREVESRFDFRNVEASFELNDASKTIKVLSESDFQVNQLLDILRAKLLKRGIEGSSLDVPENIVHSGKTWFVEAKLKQGIESATQKKIVKMIKDSKLKVQAQIQGDEIRVTGKSRDDLQAVMAMVRGGDLGQPFQFKNFRD.

Belongs to the YajQ family.

Nucleotide-binding protein. The protein is Nucleotide-binding protein YajQ of Escherichia coli (strain K12 / DH10B).